The chain runs to 121 residues: Large ribosomal subunit protein bL12 (121 aa).

It belongs to the bacterial ribosomal protein bL12 family. As to quaternary structure, homodimer. Part of the ribosomal stalk of the 50S ribosomal subunit. Forms a multimeric L10(L12)X complex, where L10 forms an elongated spine to which 2 to 4 L12 dimers bind in a sequential fashion. Binds GTP-bound translation factors.

Its function is as follows. Forms part of the ribosomal stalk which helps the ribosome interact with GTP-bound translation factors. Is thus essential for accurate translation. This chain is Large ribosomal subunit protein bL12, found in Lactobacillus delbrueckii subsp. bulgaricus (strain ATCC BAA-365 / Lb-18).